Consider the following 490-residue polypeptide: N-succinylglutamate 5-semialdehyde dehydrogenase (490 aa).

224–229 serves as a coordination point for NAD(+); the sequence is GSSPTG. Catalysis depends on residues Glu-247 and Cys-281.

Belongs to the aldehyde dehydrogenase family. AstD subfamily.

It carries out the reaction N-succinyl-L-glutamate 5-semialdehyde + NAD(+) + H2O = N-succinyl-L-glutamate + NADH + 2 H(+). It functions in the pathway amino-acid degradation; L-arginine degradation via AST pathway; L-glutamate and succinate from L-arginine: step 4/5. Its function is as follows. Catalyzes the NAD-dependent reduction of succinylglutamate semialdehyde into succinylglutamate. The polypeptide is N-succinylglutamate 5-semialdehyde dehydrogenase (Hahella chejuensis (strain KCTC 2396)).